The sequence spans 300 residues: Acetylglutamate kinase (300 aa).

Substrate-binding positions include Gly-73–Gly-74, Arg-95, and Asn-197.

The protein belongs to the acetylglutamate kinase family. ArgB subfamily.

The protein localises to the cytoplasm. The catalysed reaction is N-acetyl-L-glutamate + ATP = N-acetyl-L-glutamyl 5-phosphate + ADP. Its pathway is amino-acid biosynthesis; L-arginine biosynthesis; N(2)-acetyl-L-ornithine from L-glutamate: step 2/4. Catalyzes the ATP-dependent phosphorylation of N-acetyl-L-glutamate. The chain is Acetylglutamate kinase from Bordetella parapertussis (strain 12822 / ATCC BAA-587 / NCTC 13253).